Reading from the N-terminus, the 349-residue chain is ATPase GET3 (349 aa).

ATP is bound at residue 26-33 (KGGVGKTT). Residue D57 is part of the active site. ATP contacts are provided by E242 and N269. Positions 281 and 284 each coordinate Zn(2+).

It belongs to the arsA ATPase family. In terms of assembly, homodimer. Component of the Golgi to ER traffic (GET) complex, which is composed of GET1, GET2 and GET3. Within the complex, GET1 and GET2 form a heterotetramer which is stabilized by phosphatidylinositol binding and which binds to the GET3 homodimer. Interacts with the chloride channel protein GEF1.

It localises to the cytoplasm. The protein resides in the endoplasmic reticulum. Its subcellular location is the golgi apparatus. Functionally, ATPase required for the post-translational delivery of tail-anchored (TA) proteins to the endoplasmic reticulum. Recognizes and selectively binds the transmembrane domain of TA proteins in the cytosol. This complex then targets to the endoplasmic reticulum by membrane-bound receptors GET1 and GET2, where the tail-anchored protein is released for insertion. This process is regulated by ATP binding and hydrolysis. ATP binding drives the homodimer towards the closed dimer state, facilitating recognition of newly synthesized TA membrane proteins. ATP hydrolysis is required for insertion. Subsequently, the homodimer reverts towards the open dimer state, lowering its affinity for the GET1-GET2 receptor, and returning it to the cytosol to initiate a new round of targeting. Cooperates with the HDEL receptor ERD2 to mediate the ATP-dependent retrieval of resident ER proteins that contain a C-terminal H-D-E-L retention signal from the Golgi to the ER. Involved in low-level resistance to the oxyanions arsenite and arsenate, and in heat tolerance. The sequence is that of ATPase GET3 from Lodderomyces elongisporus (strain ATCC 11503 / CBS 2605 / JCM 1781 / NBRC 1676 / NRRL YB-4239) (Yeast).